The following is a 562-amino-acid chain: MANAEVSVPVGDVVVVPTEGNEGENPEDTKTQVILQLQPVQQGIYEAGSENSAAVVAVETHTIHKIEEGIDASSIEANEDMEIAYPITCGESKAVLLWKKFVCPGINVKCVKFNDQLISPKHFVHLAGKSTLKDWKRAIRLGGIMLRKMMDSGQIDFYQHDKVCSNTCRSTKFDLLISSARAPVPGQQTSVVQTPTSADGNITQIAISEESMEEAGLEWNSALTAAVTMATEEGIKKESEEISEDTLMFWKGIADVGLMEEVVCNIQKEIEELLRGVQQRLIHAPFQVTDAAVLNNVANTFGLMDTVKRVLDNRRKQVEHGEEQFLYTLADLERQLEEQKKQAQDPRLKSQTVQNVVLMPVSTPKPPKRPRLQRPASTTVLSPSPVQQPQFTVISPITITPVGQSFSMGNIPVATLSQGTSPVTVHTLPSGPQLFRYATVVSSAKSNSPDTVTIHPSSSLALLSSTSMQDGSTLGNMATMVSPVELVAMESGLTSAIQAVESTSEDGQTIIEIDPAPDPEADDPEGKAVILETELRTEEKVVANMEERQHQVHNVEIVVLED.

Alanine 2 bears the N-acetylalanine mark. One can recognise an SAND domain in the interval 72-156; sequence ASSIEANEDM…RKMMDSGQID (85 aa). Cysteine 103 provides a ligand contact to Zn(2+). DNA contacts are provided by lysine 129, lysine 133, lysine 136, and arginine 147. Residues histidine 160, cysteine 164, and cysteine 168 each contribute to the Zn(2+) site. Positions 311–357 form a coiled coil; sequence LDNRRKQVEHGEEQFLYTLADLERQLEEQKKQAQDPRLKSQTVQNVV. The tract at residues 360–384 is disordered; the sequence is PVSTPKPPKRPRLQRPASTTVLSPS. Positions 375 to 384 are enriched in polar residues; the sequence is PASTTVLSPS.

As to quaternary structure, homodimer, and heterodimer of GMEB1 and GMEB2. Interacts with the glucocorticoid receptor (NR3C1) and NCOA2/TIF2. May interact with HSP27 and CREB-binding protein (CBP). Interacts with TRIM63.

Its subcellular location is the nucleus. The protein resides in the cytoplasm. Trans-acting factor that binds to glucocorticoid modulatory elements (GME) present in the TAT (tyrosine aminotransferase) promoter and increases sensitivity to low concentrations of glucocorticoids. Also binds to the transferrin receptor promoter. In Rattus norvegicus (Rat), this protein is Glucocorticoid modulatory element-binding protein 1 (Gmeb1).